Consider the following 258-residue polypeptide: Imidazole glycerol phosphate synthase subunit HisF (258 aa).

Residues D12 and D131 contribute to the active site.

This sequence belongs to the HisA/HisF family. Heterodimer of HisH and HisF.

Its subcellular location is the cytoplasm. The enzyme catalyses 5-[(5-phospho-1-deoxy-D-ribulos-1-ylimino)methylamino]-1-(5-phospho-beta-D-ribosyl)imidazole-4-carboxamide + L-glutamine = D-erythro-1-(imidazol-4-yl)glycerol 3-phosphate + 5-amino-1-(5-phospho-beta-D-ribosyl)imidazole-4-carboxamide + L-glutamate + H(+). The protein operates within amino-acid biosynthesis; L-histidine biosynthesis; L-histidine from 5-phospho-alpha-D-ribose 1-diphosphate: step 5/9. Functionally, IGPS catalyzes the conversion of PRFAR and glutamine to IGP, AICAR and glutamate. The HisF subunit catalyzes the cyclization activity that produces IGP and AICAR from PRFAR using the ammonia provided by the HisH subunit. This chain is Imidazole glycerol phosphate synthase subunit HisF, found in Corynebacterium glutamicum (strain R).